The sequence spans 298 residues: Tyrosine recombinase XerC (298 aa).

Residues 1 to 84 (MNHIQEAFLN…TLRTFYEYWM (84 aa)) enclose the Core-binding (CB) domain. The Tyr recombinase domain occupies 105 to 286 (YLPQFFYEEE…SNQQLRKVYL (182 aa)). Residues R145, K169, H238, R241, and H264 contribute to the active site. Y273 (O-(3'-phospho-DNA)-tyrosine intermediate) is an active-site residue.

Belongs to the 'phage' integrase family. XerC subfamily. In terms of assembly, forms a cyclic heterotetrameric complex composed of two molecules of XerC and two molecules of XerD.

It is found in the cytoplasm. Site-specific tyrosine recombinase, which acts by catalyzing the cutting and rejoining of the recombining DNA molecules. The XerC-XerD complex is essential to convert dimers of the bacterial chromosome into monomers to permit their segregation at cell division. It also contributes to the segregational stability of plasmids. This is Tyrosine recombinase XerC from Staphylococcus aureus (strain MSSA476).